The primary structure comprises 327 residues: Quinone oxidoreductase (327 aa).

This sequence belongs to the zinc-containing alcohol dehydrogenase family. Quinone oxidoreductase subfamily. As to quaternary structure, homodimer.

The catalysed reaction is 2 a quinone + NADPH + H(+) = 2 a 1,4-benzosemiquinone + NADP(+). This chain is Quinone oxidoreductase (qor), found in Salmonella typhimurium (strain LT2 / SGSC1412 / ATCC 700720).